Reading from the N-terminus, the 184-residue chain is Endothelial cell-specific molecule 1 (184 aa).

Residues 1 to 21 (MKSLLLLTTLLIPLHLGMAWS) form the signal peptide. The region spanning 24–102 (YAVDCPEHCD…GDEFGVCKDC (79 aa)) is the IGFBP N-terminal domain. 6 cysteine pairs are disulfide-bonded: Cys-28/Cys-51, Cys-32/Cys-53, Cys-37/Cys-54, Cys-43/Cys-57, Cys-65/Cys-83, and Cys-77/Cys-99. The segment at 145–184 (RTSASQTERDAASGDGNAVREEIGDRNAARPSVMKWLNPR) is disordered. The segment covering 151–172 (TERDAASGDGNAVREEIGDRNA) has biased composition (basic and acidic residues). O-linked (Xyl...) (chondroitin sulfate) serine glycosylation occurs at Ser-157.

Post-translationally, O-glycosylated; contains chondroitin sulfate and dermatan sulfate. In terms of tissue distribution, pineal gland specific.

The protein localises to the secreted. Involved in angiogenesis; promotes angiogenic sprouting. May have potent implications in lung endothelial cell-leukocyte interactions. The protein is Endothelial cell-specific molecule 1 (Esm1) of Rattus norvegicus (Rat).